The chain runs to 286 residues: Dolichyl-diphosphooligosaccharide--protein glycosyltransferase subunit SWP1 (286 aa).

An N-terminal signal peptide occupies residues 1–19; sequence MQFFKTLAALVSCISFVLA. Residues 20-194 are Lumenal-facing; sequence YVAQDVHVSF…HAEPKRVAKP (175 aa). Residues 195 to 215 traverse the membrane as a helical segment; sequence IAVIFVLIIFITILSLIVTWL. The Cytoplasmic segment spans residues 216–228; the sequence is NSCAAAFNNIPTG. Residues 229–249 form a helical membrane-spanning segment; that stretch reads VTAVYFLGFIATIVGFEVIFA. Residues 250 to 252 are Lumenal-facing; sequence RYY. Residues 253-273 form a helical membrane-spanning segment; that stretch reads LGTSIFETLFSSLYLGAPGLL. Residues 274–286 are Cytoplasmic-facing; it reads TSTKFLRSFGQTI.

It belongs to the SWP1 family. As to quaternary structure, component of the oligosaccharyltransferase (OST) complex, which appears to exist in two assemblies comprising OST1, OST2, OST4, OST5, STT3, SWP1, WPB1, and either OST3 or OST6. OST assembly occurs through the formation of 3 subcomplexes. Subcomplex 1 contains OST1 and OST5, subcomplex 2 contains STT3, OST3, and OST4, and subcomplex 3 contains OST2, WBP1, and SWP1. Interacts with SEC61 and SSS1.

The protein resides in the endoplasmic reticulum membrane. Its pathway is protein modification; protein glycosylation. Subunit of the oligosaccharyl transferase (OST) complex that catalyzes the initial transfer of a defined glycan (Glc(3)Man(9)GlcNAc(2) in eukaryotes) from the lipid carrier dolichol-pyrophosphate to an asparagine residue within an Asn-X-Ser/Thr consensus motif in nascent polypeptide chains, the first step in protein N-glycosylation. N-glycosylation occurs cotranslationally and the complex associates with the Sec61 complex at the channel-forming translocon complex that mediates protein translocation across the endoplasmic reticulum (ER). All subunits are required for a maximal enzyme activity. In Saccharomyces cerevisiae (strain ATCC 204508 / S288c) (Baker's yeast), this protein is Dolichyl-diphosphooligosaccharide--protein glycosyltransferase subunit SWP1 (SWP1).